The sequence spans 177 residues: Large ribosomal subunit protein uL6 (177 aa).

The protein belongs to the universal ribosomal protein uL6 family. As to quaternary structure, part of the 50S ribosomal subunit.

This protein binds to the 23S rRNA, and is important in its secondary structure. It is located near the subunit interface in the base of the L7/L12 stalk, and near the tRNA binding site of the peptidyltransferase center. This Haemophilus ducreyi (strain 35000HP / ATCC 700724) protein is Large ribosomal subunit protein uL6.